Here is a 541-residue protein sequence, read N- to C-terminus: Membrane protein insertase YidC (541 aa).

6 consecutive transmembrane segments (helical) span residues 6–26 (NLLLIGLLFVSFLLWQQWESD), 326–346 (VVDYGFLWWLAVPIHWILMFF), 349–369 (LVHNWGVAIILVTLTVRGLLY), 420–440 (GGCLPILLQMPIFIALYWVLL), 457–477 (LSVQDPYYVLPLLMGASMWAM), and 500–520 (MIFTVFFLWFPAGLVLYWLVG).

Belongs to the OXA1/ALB3/YidC family. Type 1 subfamily. In terms of assembly, interacts with the Sec translocase complex via SecD. Specifically interacts with transmembrane segments of nascent integral membrane proteins during membrane integration.

Its subcellular location is the cell inner membrane. In terms of biological role, required for the insertion and/or proper folding and/or complex formation of integral membrane proteins into the membrane. Involved in integration of membrane proteins that insert both dependently and independently of the Sec translocase complex, as well as at least some lipoproteins. Aids folding of multispanning membrane proteins. This is Membrane protein insertase YidC from Shewanella amazonensis (strain ATCC BAA-1098 / SB2B).